Consider the following 293-residue polypeptide: Ribosomal protein L11 methyltransferase (293 aa).

Residues Thr145, Gly166, Asp188, and Asn230 each contribute to the S-adenosyl-L-methionine site.

Belongs to the methyltransferase superfamily. PrmA family.

It is found in the cytoplasm. The enzyme catalyses L-lysyl-[protein] + 3 S-adenosyl-L-methionine = N(6),N(6),N(6)-trimethyl-L-lysyl-[protein] + 3 S-adenosyl-L-homocysteine + 3 H(+). In terms of biological role, methylates ribosomal protein L11. The chain is Ribosomal protein L11 methyltransferase from Edwardsiella ictaluri (strain 93-146).